A 110-amino-acid chain; its full sequence is RNA polymerase II transcriptional coactivator (110 aa).

Residues 1–50 (MPKTKKKDSSSDSDSGPDDRIKPASKKAKESDAPNSDPKDSGENGATSWT) are disordered. The span at 17–42 (PDDRIKPASKKAKESDAPNSDPKDSG) shows a compositional bias: basic and acidic residues.

It belongs to the transcriptional coactivator PC4 family.

The protein localises to the nucleus. Functionally, general coactivator that functions cooperatively with TAFs and mediates functional interactions between upstream activators and the general transcriptional machinery. Binds single-stranded DNA. Binds specifically to the NssBF element, a short nucleotide sequence of the 1731 retrotransposon, to repress promoter activity. The polypeptide is RNA polymerase II transcriptional coactivator (Ssb-c31a) (Drosophila melanogaster (Fruit fly)).